We begin with the raw amino-acid sequence, 372 residues long: Aminomethyltransferase (372 aa).

This sequence belongs to the GcvT family. In terms of assembly, the glycine cleavage system is composed of four proteins: P, T, L and H.

It catalyses the reaction N(6)-[(R)-S(8)-aminomethyldihydrolipoyl]-L-lysyl-[protein] + (6S)-5,6,7,8-tetrahydrofolate = N(6)-[(R)-dihydrolipoyl]-L-lysyl-[protein] + (6R)-5,10-methylene-5,6,7,8-tetrahydrofolate + NH4(+). The glycine cleavage system catalyzes the degradation of glycine. In Burkholderia orbicola (strain MC0-3), this protein is Aminomethyltransferase.